We begin with the raw amino-acid sequence, 140 residues long: Small ribosomal subunit protein uS12 (140 aa).

Positions 1–20 are disordered; sequence MPTINQLVRKGRQSKVVKSD. Aspartate 102 carries the 3-methylthioaspartic acid modification. The segment at 121–140 is disordered; the sequence is DGRMQGRSKYGTKRPKAAKK. Basic residues predominate over residues 130–140; the sequence is YGTKRPKAAKK.

Belongs to the universal ribosomal protein uS12 family. As to quaternary structure, part of the 30S ribosomal subunit. Contacts proteins S8 and S17. May interact with IF1 in the 30S initiation complex.

With S4 and S5 plays an important role in translational accuracy. Its function is as follows. Interacts with and stabilizes bases of the 16S rRNA that are involved in tRNA selection in the A site and with the mRNA backbone. Located at the interface of the 30S and 50S subunits, it traverses the body of the 30S subunit contacting proteins on the other side and probably holding the rRNA structure together. The combined cluster of proteins S8, S12 and S17 appears to hold together the shoulder and platform of the 30S subunit. The polypeptide is Small ribosomal subunit protein uS12 (Exiguobacterium sibiricum (strain DSM 17290 / CCUG 55495 / CIP 109462 / JCM 13490 / 255-15)).